A 376-amino-acid chain; its full sequence is Succinyl-diaminopimelate desuccinylase (376 aa).

Histidine 68 contributes to the Zn(2+) binding site. Aspartate 70 is a catalytic residue. Aspartate 101 is a Zn(2+) binding site. Glutamate 135 (proton acceptor) is an active-site residue. Glutamate 136, glutamate 164, and histidine 349 together coordinate Zn(2+).

The protein belongs to the peptidase M20A family. DapE subfamily. As to quaternary structure, homodimer. Requires Zn(2+) as cofactor. The cofactor is Co(2+).

The enzyme catalyses N-succinyl-(2S,6S)-2,6-diaminopimelate + H2O = (2S,6S)-2,6-diaminopimelate + succinate. It functions in the pathway amino-acid biosynthesis; L-lysine biosynthesis via DAP pathway; LL-2,6-diaminopimelate from (S)-tetrahydrodipicolinate (succinylase route): step 3/3. Its function is as follows. Catalyzes the hydrolysis of N-succinyl-L,L-diaminopimelic acid (SDAP), forming succinate and LL-2,6-diaminopimelate (DAP), an intermediate involved in the bacterial biosynthesis of lysine and meso-diaminopimelic acid, an essential component of bacterial cell walls. The polypeptide is Succinyl-diaminopimelate desuccinylase (Marinobacter nauticus (strain ATCC 700491 / DSM 11845 / VT8) (Marinobacter aquaeolei)).